An 812-amino-acid polypeptide reads, in one-letter code: Xaa-Pro dipeptidyl-peptidase (812 aa).

Residues Ser-372, Asp-492, and His-523 each act as charge relay system in the active site.

The protein belongs to the peptidase S15 family. In terms of assembly, homodimer.

The protein localises to the cytoplasm. The catalysed reaction is Hydrolyzes Xaa-Pro-|- bonds to release unblocked, N-terminal dipeptides from substrates including Ala-Pro-|-p-nitroanilide and (sequentially) Tyr-Pro-|-Phe-Pro-|-Gly-Pro-|-Ile.. In terms of biological role, removes N-terminal dipeptides sequentially from polypeptides having unsubstituted N-termini provided that the penultimate residue is proline. This chain is Xaa-Pro dipeptidyl-peptidase, found in Pediococcus pentosaceus (strain ATCC 25745 / CCUG 21536 / LMG 10740 / 183-1w).